A 504-amino-acid polypeptide reads, in one-letter code: Cytochrome P450 71B4 (504 aa).

Residues M1 to F21 form a helical membrane-spanning segment. C446 contributes to the heme binding site.

This sequence belongs to the cytochrome P450 family. It depends on heme as a cofactor.

It is found in the membrane. The sequence is that of Cytochrome P450 71B4 (CYP71B4) from Arabidopsis thaliana (Mouse-ear cress).